The chain runs to 754 residues: Disintegrin and metalloproteinase domain-containing protein 32 (754 aa).

The N-terminal stretch at 1–22 is a signal peptide; the sequence is MLGAMLHTLLLLLLAELGALLA. At Ser-23 the chain carries Phosphoserine. A propeptide spanning residues 23–176 is cleaved from the precursor; sequence SGPESQSSFL…TNYGILINKK (154 aa). Asn-126 carries N-linked (GlcNAc...) asparagine glycosylation. At 177 to 689 the chain is on the extracellular side; that stretch reads PKSPFKNLFP…ERASKNQEKK (513 aa). One can recognise a Peptidase M12B domain in the interval 187–384; the sequence is LYLEMSIVVD…EGAKCLQNKP (198 aa). 4 disulfide bridges follow: Cys-296–Cys-379, Cys-338–Cys-363, Cys-340–Cys-345, and Cys-454–Cys-475. 4 N-linked (GlcNAc...) asparagine glycosylation sites follow: Asn-362, Asn-469, Asn-570, and Asn-571. The region spanning 391 to 483 is the Disintegrin domain; sequence AAVCGNGKVE…NCPPDVTINN (93 aa). The EGF-like domain maps to 628 to 660; the sequence is QSKTCSSKCHGNGVCNSHGVCHCNAGYSPPNCQ. 3 disulfide bridges follow: Cys-632-Cys-642, Cys-636-Cys-648, and Cys-650-Cys-659. A helical membrane pass occupies residues 690–710; the sequence is WLLSLYIVLIILASVFLIGTG. Residues 711–754 are Cytoplasmic-facing; sequence WKGLKQCGSKEEESMSSESKSEDSTYTYVSRSTSETSSMTSTSS. Basic and acidic residues predominate over residues 720–733; that stretch reads KEEESMSSESKSED. The interval 720-754 is disordered; that stretch reads KEEESMSSESKSEDSTYTYVSRSTSETSSMTSTSS. Low complexity predominate over residues 734–754; that stretch reads STYTYVSRSTSETSSMTSTSS.

As to expression, expressed in sperm (at protein level). Highly expressed in the testis and weakly expressed in the epididymis, brain and heart.

It is found in the membrane. In terms of biological role, may play a role in sperm development and fertilization This is a non-catalytic metalloprotease-like protein. The protein is Disintegrin and metalloproteinase domain-containing protein 32 of Mus musculus (Mouse).